Consider the following 462-residue polypeptide: A-type ATP synthase subunit B (462 aa).

The protein belongs to the ATPase alpha/beta chains family. As to quaternary structure, has multiple subunits with at least A(3), B(3), C, D, E, F, H, I and proteolipid K(x).

The protein localises to the cell membrane. Its function is as follows. Component of the A-type ATP synthase that produces ATP from ADP in the presence of a proton gradient across the membrane. The B chain is a regulatory subunit. The polypeptide is A-type ATP synthase subunit B (Methanobrevibacter smithii (strain ATCC 35061 / DSM 861 / OCM 144 / PS)).